We begin with the raw amino-acid sequence, 69 residues long: DNA-directed RNA polymerase subunit omega (69 aa).

Belongs to the RNA polymerase subunit omega family. As to quaternary structure, the RNAP catalytic core consists of 2 alpha, 1 beta, 1 beta' and 1 omega subunit. When a sigma factor is associated with the core the holoenzyme is formed, which can initiate transcription.

The catalysed reaction is RNA(n) + a ribonucleoside 5'-triphosphate = RNA(n+1) + diphosphate. Promotes RNA polymerase assembly. Latches the N- and C-terminal regions of the beta' subunit thereby facilitating its interaction with the beta and alpha subunits. The chain is DNA-directed RNA polymerase subunit omega from Carboxydothermus hydrogenoformans (strain ATCC BAA-161 / DSM 6008 / Z-2901).